The following is a 1108-amino-acid chain: Serine/threonine-protein kinase AKL1 (1108 aa).

Residue Ser-2 is modified to N-acetylserine. Ser-10 carries the post-translational modification Phosphoserine. The Protein kinase domain occupies 35-319; that stretch reads VEVVNYLAEG…IYQVLYHLCE (285 aa). ATP is bound by residues 41–49 and Lys-70; that span reads LAEGGFAQI. Residue Asp-181 is the Proton acceptor of the active site. Residues 405-466 form a disordered region; that stretch reads IPSQNVGQEL…QSPGIEDKSI (62 aa). Ser-407 carries the phosphoserine modification. Positions 419–435 are enriched in basic and acidic residues; the sequence is ESQSDQRKSTLSEDKSS. Residues 436-449 are compositionally biased toward low complexity; sequence RTTSNANSSGTANN. A Phosphothreonine modification is found at Thr-471. Polar residues predominate over residues 493-513; the sequence is KQSSDPTISEQSPRLNTQSLP. Positions 493 to 534 are disordered; the sequence is KQSSDPTISEQSPRLNTQSLPQRQKSTSSYSSGGRSMKSTSY. Ser-504 carries the post-translational modification Phosphoserine. Low complexity predominate over residues 514–534; the sequence is QRQKSTSSYSSGGRSMKSTSY. A phosphoserine mark is found at Ser-541 and Ser-574. Positions 590 to 629 are enriched in low complexity; that stretch reads QQQGQRYQQAQNQTGTQGNTFPDESQYQSRVEQQQQQQDQ. Disordered regions lie at residues 590 to 663 and 765 to 791; these read QQQG…GDSG and EDMR…HSSS. A compositionally biased stretch (polar residues) spans 781–791; it reads NSANEPMHSSS. Residue Ser-801 is modified to Phosphoserine. The tract at residues 807-838 is disordered; sequence AGKQSFQDTNEPQTGGIEDAGGSGTIKGSNNN. Over residues 810–819 the composition is skewed to polar residues; the sequence is QSFQDTNEPQ. Ser-846 is modified (phosphoserine). The interval 858–1108 is disordered; it reads GAAVSSFSSS…SFFSVFRSEK (251 aa). Residues 859 to 872 are compositionally biased toward low complexity; sequence AAVSSFSSSSSSAS. A compositionally biased stretch (basic and acidic residues) spans 910–934; that stretch reads DDARRGKTAERRPLHNERGHKDQAR. Polar residues predominate over residues 935 to 976; the sequence is SSDASKSNQFKSKDFSSVSTRQPRQSLDLNFQEVNLSSPTLT. 2 positions are modified to phosphoserine: Ser-953 and Ser-960. Positions 1006–1048 are enriched in basic and acidic residues; the sequence is ENKRHSTGHELSTRSNGKHETHRTGSKQRHDLERYRHSKDKDS. Glycyl lysine isopeptide (Lys-Gly) (interchain with G-Cter in ubiquitin) cross-links involve residues Lys-1008 and Lys-1046. Ser-1048 carries the post-translational modification Phosphoserine. Residues 1049 to 1060 show a composition bias toward low complexity; that stretch reads NSSITISTSTPS. Positions 1071–1082 are enriched in basic and acidic residues; it reads QSLDLERVRREA. A Phosphoserine modification is found at Ser-1072.

It belongs to the protein kinase superfamily. Ser/Thr protein kinase family.

It carries out the reaction L-seryl-[protein] + ATP = O-phospho-L-seryl-[protein] + ADP + H(+). The enzyme catalyses L-threonyl-[protein] + ATP = O-phospho-L-threonyl-[protein] + ADP + H(+). Functionally, phosphorylates SCD5. This is Serine/threonine-protein kinase AKL1 (AKL1) from Saccharomyces cerevisiae (strain ATCC 204508 / S288c) (Baker's yeast).